The primary structure comprises 1180 residues: Pesticidal crystal protein Cry4Aa (1180 aa).

It belongs to the delta endotoxin family.

Its function is as follows. Promotes colloidosmotic lysis by binding to the midgut epithelial cells of insects. The protein is Pesticidal crystal protein Cry4Aa (cry4Aa) of Bacillus thuringiensis subsp. israelensis.